The following is a 368-amino-acid chain: MRSVEILGLAALGSLVAAAPSPSRVSNSAKKASSCTFTSAAQASKSASGCSEITLDNIAVPAGETLDLSHVDDGTTIIFEGTTSFGYKEWKGPLIQFAGTGITVKQNTGAVIDGDGSRWWDGKGTNGGKTKPKFMYAHKLRDSTITGLSIKNTPVQAISVQATNLQLTDITIDNSDGDENGGHNTDAFDIGESNGVYIRGAVVKNQDDCIAINSGENIEFSGGSCSGGHGLSIGSVGGRDNNIVKNVTITDSTISDSDNGVRIKTIYDATGSVGDVTYSNIKLSNIAKYGIVIEQDYENGSPTGTPTTGVPITGLTIDGITGSVASNAVQVYILCGDGSCSDWTWKGVDLTGGKKSSKCENVPSGASC.

A signal peptide spans 1–18 (MRSVEILGLAALGSLVAA). Positions 19-31 (APSPSRVSNSAKK) are excised as a propeptide. A disulfide bridge links cysteine 35 with cysteine 50. PbH1 repeat units follow at residues 162–192 (ATNL…DIGE) and 193–214 (SNGV…AINS). The active-site Proton donor is the aspartate 207. An intrachain disulfide couples cysteine 209 to cysteine 225. Residue histidine 229 is part of the active site. PbH1 repeat units lie at residues 244–265 (VKNV…RIKT), 273–295 (VGDV…VIEQ), and 307–328 (TTGV…ASNA). A glycan (N-linked (GlcNAc...) asparagine) is linked at asparagine 246. 2 cysteine pairs are disulfide-bonded: cysteine 335/cysteine 340 and cysteine 359/cysteine 368.

This sequence belongs to the glycosyl hydrolase 28 family.

The protein localises to the secreted. The catalysed reaction is (1,4-alpha-D-galacturonosyl)n+m + H2O = (1,4-alpha-D-galacturonosyl)n + (1,4-alpha-D-galacturonosyl)m.. Functionally, involved in maceration and soft-rotting of plant tissue. Hydrolyzes the 1,4-alpha glycosidic bonds of de-esterified pectate in the smooth region of the plant cell wall. In Aspergillus clavatus (strain ATCC 1007 / CBS 513.65 / DSM 816 / NCTC 3887 / NRRL 1 / QM 1276 / 107), this protein is Probable endopolygalacturonase I (pgaI).